Here is a 103-residue protein sequence, read N- to C-terminus: Large ribosomal subunit protein bL21 (103 aa).

This sequence belongs to the bacterial ribosomal protein bL21 family. In terms of assembly, part of the 50S ribosomal subunit. Contacts protein L20.

This protein binds to 23S rRNA in the presence of protein L20. The polypeptide is Large ribosomal subunit protein bL21 (Acinetobacter baumannii (strain AB307-0294)).